The primary structure comprises 111 residues: Anti-adapter protein IraM (111 aa).

Belongs to the IraM/RssC family.

It localises to the cytoplasm. In terms of biological role, involved in the stabilization of the sigma stress factor RpoS. In Cronobacter sakazakii (strain ATCC BAA-894) (Enterobacter sakazakii), this protein is Anti-adapter protein IraM.